Reading from the N-terminus, the 85-residue chain is Anti-neuroexcitation peptide 3 (85 aa).

The N-terminal stretch at 1–21 (MKLSLLLVISASMLIDGLVNA) is a signal peptide. The region spanning 22-82 (DGYIRGSNGC…TWKSESNTCG (61 aa)) is the LCN-type CS-alpha/beta domain. 4 cysteine pairs are disulfide-bonded: C31/C81, C35/C56, C42/C63, and C46/C65.

Belongs to the long (4 C-C) scorpion toxin superfamily. Sodium channel inhibitor family. Beta subfamily. Expressed by the venom gland.

The protein localises to the secreted. Binds to sodium channels (Nav) and inhibits them. Recombinant ANEP delays the convulsion seizure of model animals by 18% and shows anti-neuroexcitatory activity. In Olivierus martensii (Manchurian scorpion), this protein is Anti-neuroexcitation peptide 3.